The sequence spans 420 residues: Ribosome biogenesis protein WDR12 homolog (420 aa).

Residues 10-92 (VQVHLKTKQE…EDAIEIEYVE (83 aa)) form a ubiquitin-like (UBL) domain region. WD repeat units lie at residues 104–142 (LHDDWVSAVKASGKWILSGCYDNTLNLWTNKGKHILTIS), 143–185 (GHTA…NSVE), 192–231 (GHERGVDSVSVSPDGLRFATGSWDTMLKVWSAEQEDAAEG), 250–288 (GHRESVSAVQWMDASTLLTGSWDHTLKVWDLSLEGIKTE), 290–329 (STNKSIFDASYSKLNRLILTASADKNLRLYDPRTNQGSVV), 335–375 (GHNA…APLY), and 379–417 (GHGEKVLDIDWSNPKYIVSGGVDNTVRVFKSRKALAEDT).

The protein belongs to the WD repeat WDR12/YTM1 family.

The protein resides in the nucleus. It is found in the nucleolus. It localises to the nucleoplasm. Its function is as follows. Required for maturation of ribosomal RNAs and formation of the large ribosomal subunit. The chain is Ribosome biogenesis protein WDR12 homolog from Drosophila erecta (Fruit fly).